The primary structure comprises 522 residues: DEAD-box ATP-dependent RNA helicase 1 (522 aa).

The Q motif motif lies at 30-59 (CALDTLPCLNPKLKKALENMGISSLFPVQV). The Helicase ATP-binding domain occupies 66–297 (IGPGGFERDI…QLDLHHPLFM (232 aa)). 79–86 (SPTGSGKT) serves as a coordination point for ATP. The DEAD box motif lies at 207 to 210 (DETD). A Helicase C-terminal domain is found at 325-475 (YLVALLKSWE…PIPPTSLDSI (151 aa)). A disordered region spans residues 490–522 (VESEAPKKGRQAFRHNSRTGNSQTKLNKPRSEA). Positions 497-506 (KGRQAFRHNS) are enriched in basic residues.

The protein belongs to the DEAD box helicase family. DDX51/DBP6 subfamily.

It catalyses the reaction ATP + H2O = ADP + phosphate + H(+). This is DEAD-box ATP-dependent RNA helicase 1 (RH1) from Arabidopsis thaliana (Mouse-ear cress).